The chain runs to 493 residues: Matrilin-1 (493 aa).

Positions 1–23 (MDGIFCALPLSLLLLLQSCGVWG) are cleaved as a signal peptide. A VWFA 1 domain is found at 24-220 (APPQPRGTLC…THKFQEAFCV (197 aa)). Asn-74 carries an N-linked (GlcNAc...) asparagine glycan. One can recognise an EGF-like domain in the interval 221 to 261 (VSDLCATGDHDCEQICISTPGSYKCACKEGFTLNNDGKTCS). Disulfide bonds link Cys-225-Cys-236, Cys-232-Cys-245, and Cys-247-Cys-260. A VWFA 2 domain is found at 262–450 (ACSGGSGSAL…GKKLQMKICV (189 aa)). Residues 462–492 (KFQTKVEELINTLQQKLEAVAKRIEALENKI) are a coiled coil.

As to quaternary structure, homotrimer. Expressed in xyphoid cartilage and chondrocytes (at protein level).

It is found in the secreted. The protein localises to the extracellular space. It localises to the extracellular matrix. Its function is as follows. A major component of the extracellular matrix of non-articular cartilage. Binds to type 2 collagens and forms long concatenated protein networks as part of the extracellular matrix. Required for the network-like organization and bundling of collagen fibrils surrounding chondrocytes in the zones of maturation and hypertrophy. Required for mechanotransduction and adaption to mechanical loading in cartilage chondrocytes, resulting in an increase in expression of the extracellular matrix components ACAN and COL2A1. Acts as a moderator of angiogenesis in response to injury. The polypeptide is Matrilin-1 (Gallus gallus (Chicken)).